We begin with the raw amino-acid sequence, 342 residues long: Phosphate acyltransferase (342 aa).

This sequence belongs to the PlsX family. In terms of assembly, homodimer. Probably interacts with PlsY.

Its subcellular location is the cytoplasm. It catalyses the reaction a fatty acyl-[ACP] + phosphate = an acyl phosphate + holo-[ACP]. The protein operates within lipid metabolism; phospholipid metabolism. Catalyzes the reversible formation of acyl-phosphate (acyl-PO(4)) from acyl-[acyl-carrier-protein] (acyl-ACP). This enzyme utilizes acyl-ACP as fatty acyl donor, but not acyl-CoA. This Shewanella loihica (strain ATCC BAA-1088 / PV-4) protein is Phosphate acyltransferase.